The sequence spans 582 residues: Probable DNA ligase (582 aa).

Glu243 contacts ATP. Lys245 (N6-AMP-lysine intermediate) is an active-site residue. ATP is bound by residues Arg250, Arg265, Glu295, Phe335, Arg410, and Lys416.

It belongs to the ATP-dependent DNA ligase family. Mg(2+) is required as a cofactor.

It carries out the reaction ATP + (deoxyribonucleotide)n-3'-hydroxyl + 5'-phospho-(deoxyribonucleotide)m = (deoxyribonucleotide)n+m + AMP + diphosphate.. Its function is as follows. DNA ligase that seals nicks in double-stranded DNA during DNA replication, DNA recombination and DNA repair. The sequence is that of Probable DNA ligase from Dictyoglomus turgidum (strain DSM 6724 / Z-1310).